The following is a 270-amino-acid chain: Glutamate racemase (270 aa).

Residues 14–15 (DS) and 46–47 (YG) each bind substrate. Residue Cys77 is the Proton donor/acceptor of the active site. 78–79 (NT) is a substrate binding site. Cys186 functions as the Proton donor/acceptor in the catalytic mechanism. 187 to 188 (TH) serves as a coordination point for substrate.

Belongs to the aspartate/glutamate racemases family.

It catalyses the reaction L-glutamate = D-glutamate. It functions in the pathway cell wall biogenesis; peptidoglycan biosynthesis. Provides the (R)-glutamate required for cell wall biosynthesis. This chain is Glutamate racemase, found in Trichodesmium erythraeum (strain IMS101).